A 402-amino-acid chain; its full sequence is NADH-quinone oxidoreductase subunit D (402 aa).

Belongs to the complex I 49 kDa subunit family. As to quaternary structure, NDH-1 is composed of 14 different subunits. Subunits NuoB, C, D, E, F, and G constitute the peripheral sector of the complex.

It localises to the cell inner membrane. It carries out the reaction a quinone + NADH + 5 H(+)(in) = a quinol + NAD(+) + 4 H(+)(out). NDH-1 shuttles electrons from NADH, via FMN and iron-sulfur (Fe-S) centers, to quinones in the respiratory chain. The immediate electron acceptor for the enzyme in this species is believed to be ubiquinone. Couples the redox reaction to proton translocation (for every two electrons transferred, four hydrogen ions are translocated across the cytoplasmic membrane), and thus conserves the redox energy in a proton gradient. The protein is NADH-quinone oxidoreductase subunit D of Cereibacter sphaeroides (strain ATCC 17029 / ATH 2.4.9) (Rhodobacter sphaeroides).